The chain runs to 550 residues: Nucleoside hydrolase 4 (550 aa).

Belongs to the IUNH family.

The protein resides in the cytoplasm. In terms of biological role, may be involved in the degradation of nucleosides. This Arabidopsis thaliana (Mouse-ear cress) protein is Nucleoside hydrolase 4.